The chain runs to 500 residues: Intermediate filament protein ifc-1 (500 aa).

The interval 1-36 is head; sequence MSLYGGIPTNLVSGMSSAGAICTTQIRDAREREKRE. The IF rod domain occupies 33-383; that stretch reads EKREIGLLND…VLLNGANVTT (351 aa). The coil 1A stretch occupies residues 37–68; the sequence is IGLLNDRLADYIEKVRFLKAQNHVLSHDIEIL. Positions 69–81 are linker 1; sequence RRGFSGGGHISSF. Positions 82–219 are coil 1B; sequence FESEISNCTV…TENSSRIEQE (138 aa). A linker 12 region spans residues 220–237; sequence LIYIHRDTTLENRDYFRQ. A coil 2 region spans residues 238–383; the sequence is ELQAAMRDIR…VLLNGANVTT (146 aa). A tail region spans residues 384 to 496; it reads YVSNSTGAAG…RHHESSYSYS (113 aa).

This sequence belongs to the intermediate filament family.

The protein resides in the cytoplasm. Cytoplasmic intermediate filaments provide mechanical strength to cells. Not essential protein. The protein is Intermediate filament protein ifc-1 (ifc-1) of Caenorhabditis elegans.